Here is a 683-residue protein sequence, read N- to C-terminus: Translation initiation factor IF-2 (683 aa).

Positions 182 to 351 (KRPPVVTVMG…ILTAEMEELK (170 aa)) constitute a tr-type G domain. Residues 191–198 (GHVDHGKT) are G1. 191-198 (GHVDHGKT) is a binding site for GTP. The interval 216–220 (GITQH) is G2. Residues 237-240 (DTPG) are G3. Residues 237–241 (DTPGH) and 291–294 (NKID) each bind GTP. The segment at 291–294 (NKID) is G4. The tract at residues 327–329 (SAH) is G5.

The protein belongs to the TRAFAC class translation factor GTPase superfamily. Classic translation factor GTPase family. IF-2 subfamily.

The protein localises to the cytoplasm. One of the essential components for the initiation of protein synthesis. Protects formylmethionyl-tRNA from spontaneous hydrolysis and promotes its binding to the 30S ribosomal subunits. Also involved in the hydrolysis of GTP during the formation of the 70S ribosomal complex. The chain is Translation initiation factor IF-2 from Clostridium novyi (strain NT).